The primary structure comprises 86 residues: Small ribosomal subunit protein bS20 (86 aa).

This sequence belongs to the bacterial ribosomal protein bS20 family.

Its function is as follows. Binds directly to 16S ribosomal RNA. The sequence is that of Small ribosomal subunit protein bS20 from Bifidobacterium adolescentis (strain ATCC 15703 / DSM 20083 / NCTC 11814 / E194a).